We begin with the raw amino-acid sequence, 672 residues long: Hydroxyproline O-galactosyltransferase GALT5 (672 aa).

Over 1–28 (MKKPKLSKVEKIDKIDLFSSLWKQRSVR) the chain is Cytoplasmic. The chain crosses the membrane as a helical; Signal-anchor for type II membrane protein span at residues 29–49 (VIMAIGFLYLVIVSVEIPLVF). The Lumenal segment spans residues 50–672 (KSWSSSSVPL…QNKPECCNMR (623 aa)). The Galectin domain occupies 191-392 (KLMELPCGLT…DIDVHSVFVA (202 aa)). N-linked (GlcNAc...) asparagine glycosylation is found at Asn306 and Asn620.

It belongs to the glycosyltransferase 31 family. Mn(2+) serves as cofactor. As to expression, expressed in juvenile leaves, stems, cauline leaves and siliques.

The protein resides in the golgi apparatus membrane. It functions in the pathway protein modification; protein glycosylation. Functionally, possesses hydroxyproline O-galactosyltransferase activity. Transfers galactose from UDP-galactose to hydroxyproline residues in the arabinogalactan proteins (AGPs). Is specific for AGPs containing non-contiguous peptidyl hydroxyproline residues. Utilizes UDP-galactose solely as sugar donor. The addition of galactose onto the peptidyl hydroxyproline residues in AGP core proteins represents the first committed step in arabinogalactan polysaccharide addition. AGP glycans play essential roles in both vegetative and reproductive plant growth. In Arabidopsis thaliana (Mouse-ear cress), this protein is Hydroxyproline O-galactosyltransferase GALT5.